The chain runs to 1407 residues: DNA-directed RNA polymerase subunit beta' (1407 aa).

Positions 70, 72, 85, and 88 each coordinate Zn(2+). Mg(2+)-binding residues include aspartate 460, aspartate 462, and aspartate 464. Positions 814, 888, 895, and 898 each coordinate Zn(2+). Lysine 972 bears the N6-acetyllysine mark.

It belongs to the RNA polymerase beta' chain family. As to quaternary structure, the RNAP catalytic core consists of 2 alpha, 1 beta, 1 beta' and 1 omega subunit. When a sigma factor is associated with the core the holoenzyme is formed, which can initiate transcription. Mg(2+) serves as cofactor. It depends on Zn(2+) as a cofactor.

The enzyme catalyses RNA(n) + a ribonucleoside 5'-triphosphate = RNA(n+1) + diphosphate. DNA-dependent RNA polymerase catalyzes the transcription of DNA into RNA using the four ribonucleoside triphosphates as substrates. This chain is DNA-directed RNA polymerase subunit beta', found in Shigella sonnei (strain Ss046).